Consider the following 360-residue polypeptide: Zinc metalloproteinase nas-5 (360 aa).

The first 21 residues, 1–21, serve as a signal peptide directing secretion; that stretch reads MDIKQLLLSIILTVSVVNGRG. One can recognise a Peptidase M12A domain in the interval 61 to 269; the sequence is NALLSNSPLR…KKVCAIYHCS (209 aa). A glycan (N-linked (GlcNAc...) asparagine) is linked at N108. 2 cysteine pairs are disulfide-bonded: C111–C268 and C134–C157. H165 lines the Zn(2+) pocket. E166 is a catalytic residue. Positions 169 and 175 each coordinate Zn(2+). The PLAC domain maps to 299–336; sequence QGDSCTDRLGICPMLKSREMLNCKVMATFCCSSCSAPT.

Zn(2+) is required as a cofactor.

It is found in the secreted. Its function is as follows. Metalloprotease. In Caenorhabditis elegans, this protein is Zinc metalloproteinase nas-5 (nas-5).